A 102-amino-acid polypeptide reads, in one-letter code: NADH-quinone oxidoreductase subunit K (102 aa).

Transmembrane regions (helical) follow at residues 6–26 (FEHA…ALLI), 30–50 (LIVM…AFIA), and 62–82 (VMFL…LGLG).

The protein belongs to the complex I subunit 4L family. As to quaternary structure, NDH-1 is composed of 14 different subunits. Subunits NuoA, H, J, K, L, M, N constitute the membrane sector of the complex.

The protein resides in the cell inner membrane. It carries out the reaction a quinone + NADH + 5 H(+)(in) = a quinol + NAD(+) + 4 H(+)(out). In terms of biological role, NDH-1 shuttles electrons from NADH, via FMN and iron-sulfur (Fe-S) centers, to quinones in the respiratory chain. The immediate electron acceptor for the enzyme in this species is believed to be ubiquinone. Couples the redox reaction to proton translocation (for every two electrons transferred, four hydrogen ions are translocated across the cytoplasmic membrane), and thus conserves the redox energy in a proton gradient. The polypeptide is NADH-quinone oxidoreductase subunit K (Methylococcus capsulatus (strain ATCC 33009 / NCIMB 11132 / Bath)).